The chain runs to 231 residues: Heptaprenylglyceryl phosphate synthase (231 aa).

Residue K12 coordinates sn-glycerol 1-phosphate. Mg(2+) contacts are provided by D14 and T40. Sn-glycerol 1-phosphate-binding positions include Y159–G164, G189, and G209–N210.

This sequence belongs to the GGGP/HepGP synthase family. Group I subfamily. Homodimer. Mg(2+) is required as a cofactor.

The enzyme catalyses sn-glycerol 1-phosphate + all-trans-heptaprenyl diphosphate = 3-heptaprenyl-sn-glycero-1-phosphate + diphosphate. Its pathway is membrane lipid metabolism; glycerophospholipid metabolism. Prenyltransferase that catalyzes in vivo the transfer of the heptaprenyl moiety of heptaprenyl pyrophosphate (HepPP; 35 carbon atoms) to the C3 hydroxyl of sn-glycerol-1-phosphate (G1P), producing heptaprenylglyceryl phosphate (HepGP). This reaction is an ether-bond-formation step in the biosynthesis of archaea-type G1P-based membrane lipids found in Bacillales. This chain is Heptaprenylglyceryl phosphate synthase, found in Staphylococcus haemolyticus (strain JCSC1435).